Reading from the N-terminus, the 424-residue chain is Enolase (424 aa).

(2R)-2-phosphoglycerate is bound at residue glutamine 162. Glutamate 204 functions as the Proton donor in the catalytic mechanism. Residues aspartate 241, glutamate 284, and aspartate 311 each contribute to the Mg(2+) site. Positions 336, 365, 366, and 387 each coordinate (2R)-2-phosphoglycerate. Residue lysine 336 is the Proton acceptor of the active site.

Belongs to the enolase family. It depends on Mg(2+) as a cofactor.

It localises to the cytoplasm. Its subcellular location is the secreted. It is found in the cell surface. It carries out the reaction (2R)-2-phosphoglycerate = phosphoenolpyruvate + H2O. It functions in the pathway carbohydrate degradation; glycolysis; pyruvate from D-glyceraldehyde 3-phosphate: step 4/5. Its function is as follows. Catalyzes the reversible conversion of 2-phosphoglycerate (2-PG) into phosphoenolpyruvate (PEP). It is essential for the degradation of carbohydrates via glycolysis. The protein is Enolase of Rhizobium leguminosarum bv. trifolii (strain WSM2304).